Consider the following 434-residue polypeptide: Histidine--tRNA ligase (434 aa).

Belongs to the class-II aminoacyl-tRNA synthetase family. As to quaternary structure, homodimer.

The protein resides in the cytoplasm. It carries out the reaction tRNA(His) + L-histidine + ATP = L-histidyl-tRNA(His) + AMP + diphosphate + H(+). In Latilactobacillus sakei subsp. sakei (strain 23K) (Lactobacillus sakei subsp. sakei), this protein is Histidine--tRNA ligase.